Here is a 1039-residue protein sequence, read N- to C-terminus: Probable calcium-transporting ATPase 9, plasma membrane-type (1039 aa).

Residues M1–T175 lie on the Cytoplasmic side of the membrane. 2 helical membrane passes run L176–W196 and G199–V219. Residues S220–K250 lie on the Cytoplasmic side of the membrane. 2 helical membrane passes run I251–P271 and V353–L373. At V374–T406 the chain is on the cytoplasmic side. The chain crosses the membrane as a helical span at residues I407–A427. The active-site 4-aspartylphosphate intermediate is D456. The Mg(2+) site is built by D758 and D762. Residues I825–A845 traverse the membrane as a helical segment. Topologically, residues V846 to Q847 are cytoplasmic. Transmembrane regions (helical) follow at residues L848–P868 and N892–E912. Residues R913 to N960 lie on the Cytoplasmic side of the membrane. Helical transmembrane passes span W961–L981 and W995–I1015. The Cytoplasmic portion of the chain corresponds to P1016–I1039.

It belongs to the cation transport ATPase (P-type) (TC 3.A.3) family. Type IIB subfamily.

The protein resides in the membrane. The enzyme catalyses Ca(2+)(in) + ATP + H2O = Ca(2+)(out) + ADP + phosphate + H(+). With respect to regulation, activated by calmodulin. In terms of biological role, this magnesium-dependent enzyme catalyzes the hydrolysis of ATP coupled with the translocation of calcium from the cytosol out of the cell, into the endoplasmic reticulum, or into organelles. This is Probable calcium-transporting ATPase 9, plasma membrane-type from Oryza sativa subsp. japonica (Rice).